A 313-amino-acid chain; its full sequence is Olfactory receptor 10G3 (313 aa).

Residues Met1–Thr25 lie on the Extracellular side of the membrane. Asn5 is a glycosylation site (N-linked (GlcNAc...) asparagine). Residues Leu26 to Leu46 traverse the membrane as a helical segment. Residues Ile47–Arg54 lie on the Cytoplasmic side of the membrane. A helical transmembrane segment spans residues Leu55–Ser76. Over Ile77–Ala100 the chain is Extracellular. An N-linked (GlcNAc...) asparagine glycan is attached at Asn85. The cysteines at positions 98 and 190 are disulfide-linked. A helical transmembrane segment spans residues Gln101–Tyr121. At Asp122 to Lys140 the chain is on the cytoplasmic side. Residues Leu141 to Ala161 traverse the membrane as a helical segment. At Ile162–Leu198 the chain is on the extracellular side. The chain crosses the membrane as a helical span at residues Val199–Ser218. Residues Tyr219–Ala238 lie on the Cytoplasmic side of the membrane. A helical transmembrane segment spans residues Phe239–Ile259. Over Tyr260–Asp270 the chain is Extracellular. Residues Gly271 to Leu291 form a helical membrane-spanning segment. The Cytoplasmic segment spans residues Arg292 to Val313.

It belongs to the G-protein coupled receptor 1 family.

Its subcellular location is the cell membrane. Its function is as follows. Odorant receptor. The protein is Olfactory receptor 10G3 (OR10G3) of Homo sapiens (Human).